The following is a 348-amino-acid chain: MTAQPQTLKIRRPDDWHIHLRDDEMLSTVLPYTSEVFARAIVMPNLAQPITTVASAIAYRERILAAVPVGHKFTPLMTCYLTNSLDVKELTTGFEQGVFTAAKLYPANATTNSTHGVSDIPAIYPLFEQMQKIGMPLLIHGEVTDAAVDIFDREARFIDQILEPIRQKFPELKIVFEHITTKDAADYVLAGNRFLGATVTPQHLMFNRNHMLVGGIRPHLFCLPILKRSTHQQALRAAVASGSDRFFLGTDSAPHAKHRKESSCGCAGVFNAPAALPAYASVFEELNALQHLEAFCALNGPRFYGLPVNDDVVELVRTPFLQPEEIPLGNESVIPFLAGQTLNWSVKR.

Residues His-17 and His-19 each contribute to the Zn(2+) site. Substrate contacts are provided by residues 19 to 21 and Asn-45; that span reads HLR. Zn(2+)-binding residues include Lys-103, His-140, and His-178. Position 103 is an N6-carboxylysine (Lys-103). His-140 contributes to the substrate binding site. Leu-223 is a binding site for substrate. Asp-251 contributes to the Zn(2+) binding site. Asp-251 is a catalytic residue. 2 residues coordinate substrate: His-255 and Ala-267.

The protein belongs to the metallo-dependent hydrolases superfamily. DHOase family. Class II DHOase subfamily. As to quaternary structure, homodimer. It depends on Zn(2+) as a cofactor.

It catalyses the reaction (S)-dihydroorotate + H2O = N-carbamoyl-L-aspartate + H(+). It participates in pyrimidine metabolism; UMP biosynthesis via de novo pathway; (S)-dihydroorotate from bicarbonate: step 3/3. In terms of biological role, catalyzes the reversible cyclization of carbamoyl aspartate to dihydroorotate. In Yersinia pseudotuberculosis serotype O:1b (strain IP 31758), this protein is Dihydroorotase.